Here is a 505-residue protein sequence, read N- to C-terminus: Chromosomal replication initiator protein DnaA (505 aa).

The domain I, interacts with DnaA modulators stretch occupies residues 1–90 (MSVELWQQCV…RRSSAPRAAP (90 aa)). The domain II stretch occupies residues 91-168 (NAPVSAAVAA…QVEGALKHTS (78 aa)). Residues 169 to 385 (YLNRTFTFDT…GALKRVIAHS (217 aa)) form a domain III, AAA+ region region. ATP contacts are provided by glycine 213, glycine 215, lysine 216, and threonine 217. The domain IV, binds dsDNA stretch occupies residues 386 to 505 (HFMGRDITIE…YKNLLRTLTT (120 aa)).

This sequence belongs to the DnaA family. As to quaternary structure, oligomerizes as a right-handed, spiral filament on DNA at oriC.

It is found in the cytoplasm. Plays an essential role in the initiation and regulation of chromosomal replication. ATP-DnaA binds to the origin of replication (oriC) to initiate formation of the DNA replication initiation complex once per cell cycle. Binds the DnaA box (a 9 base pair repeat at the origin) and separates the double-stranded (ds)DNA. Forms a right-handed helical filament on oriC DNA; dsDNA binds to the exterior of the filament while single-stranded (ss)DNA is stabiized in the filament's interior. The ATP-DnaA-oriC complex binds and stabilizes one strand of the AT-rich DNA unwinding element (DUE), permitting loading of DNA polymerase. After initiation quickly degrades to an ADP-DnaA complex that is not apt for DNA replication. Binds acidic phospholipids. The sequence is that of Chromosomal replication initiator protein DnaA from Pseudomonas putida (strain ATCC 700007 / DSM 6899 / JCM 31910 / BCRC 17059 / LMG 24140 / F1).